The following is a 200-amino-acid chain: Putative pseudouridine methyltransferase (200 aa).

Residues methionine 133 and cysteine 187 each contribute to the S-adenosyl-L-methionine site.

Belongs to the methyltransferase superfamily. TrmY family.

The protein localises to the cytoplasm. This chain is Putative pseudouridine methyltransferase, found in Alcanivorax borkumensis (strain ATCC 700651 / DSM 11573 / NCIMB 13689 / SK2).